The sequence spans 121 residues: Large ribosomal subunit protein bL20 (121 aa).

It belongs to the bacterial ribosomal protein bL20 family.

Functionally, binds directly to 23S ribosomal RNA and is necessary for the in vitro assembly process of the 50S ribosomal subunit. It is not involved in the protein synthesizing functions of that subunit. This is Large ribosomal subunit protein bL20 from Chlamydia caviae (strain ATCC VR-813 / DSM 19441 / 03DC25 / GPIC) (Chlamydophila caviae).